Consider the following 245-residue polypeptide: Flavin-dependent thymidylate synthase (245 aa).

Residues 5–210 (IRVKLVNYTK…ELRPIIKWAK (206 aa)) form the ThyX domain. Residues Ser-59, 83–85 (RHR), and Gln-91 contribute to the FAD site. Residues 80–83 (QLVR), 91–95 (QQSQR), and Arg-149 each bind dUMP. The short motif at 83–93 (RHRLASYTQQS) is the ThyX motif element. Residues 165–167 (NLR) and His-171 contribute to the FAD site. Arg-176 contacts dUMP. Arg-176 serves as the catalytic Involved in ionization of N3 of dUMP, leading to its activation.

The protein belongs to the thymidylate synthase ThyX family. Homotetramer. FAD serves as cofactor.

The catalysed reaction is dUMP + (6R)-5,10-methylene-5,6,7,8-tetrahydrofolate + NADPH + H(+) = dTMP + (6S)-5,6,7,8-tetrahydrofolate + NADP(+). The protein operates within pyrimidine metabolism; dTTP biosynthesis. Catalyzes the reductive methylation of 2'-deoxyuridine-5'-monophosphate (dUMP) to 2'-deoxythymidine-5'-monophosphate (dTMP) while utilizing 5,10-methylenetetrahydrofolate (mTHF) as the methyl donor, and NADPH and FADH(2) as the reductant. This Thermococcus kodakarensis (strain ATCC BAA-918 / JCM 12380 / KOD1) (Pyrococcus kodakaraensis (strain KOD1)) protein is Flavin-dependent thymidylate synthase.